We begin with the raw amino-acid sequence, 467 residues long: ATP synthase subunit beta (467 aa).

Position 154–161 (154–161) interacts with ATP; it reads GGAGVGKT.

The protein belongs to the ATPase alpha/beta chains family. F-type ATPases have 2 components, CF(1) - the catalytic core - and CF(0) - the membrane proton channel. CF(1) has five subunits: alpha(3), beta(3), gamma(1), delta(1), epsilon(1). CF(0) has three main subunits: a(1), b(2) and c(9-12). The alpha and beta chains form an alternating ring which encloses part of the gamma chain. CF(1) is attached to CF(0) by a central stalk formed by the gamma and epsilon chains, while a peripheral stalk is formed by the delta and b chains.

It localises to the cell inner membrane. It carries out the reaction ATP + H2O + 4 H(+)(in) = ADP + phosphate + 5 H(+)(out). In terms of biological role, produces ATP from ADP in the presence of a proton gradient across the membrane. The catalytic sites are hosted primarily by the beta subunits. This is ATP synthase subunit beta from Leptospira borgpetersenii serovar Hardjo-bovis (strain JB197).